Consider the following 242-residue polypeptide: 6-phosphogluconolactonase (242 aa).

It belongs to the glucosamine/galactosamine-6-phosphate isomerase family. 6-phosphogluconolactonase subfamily.

It catalyses the reaction 6-phospho-D-glucono-1,5-lactone + H2O = 6-phospho-D-gluconate + H(+). It functions in the pathway carbohydrate degradation; pentose phosphate pathway; D-ribulose 5-phosphate from D-glucose 6-phosphate (oxidative stage): step 2/3. In terms of biological role, hydrolysis of 6-phosphogluconolactone to 6-phosphogluconate. This is 6-phosphogluconolactonase (pgl) from Pseudomonas putida (Arthrobacter siderocapsulatus).